The chain runs to 837 residues: Outer membrane usher protein HifC (837 aa).

The signal sequence occupies residues M1–A26. Residues C813 and C833 are joined by a disulfide bond.

This sequence belongs to the fimbrial export usher family.

It is found in the cell outer membrane. Functionally, essential for piliation. The polypeptide is Outer membrane usher protein HifC (hifC) (Haemophilus influenzae).